A 262-amino-acid polypeptide reads, in one-letter code: Adenosylcobinamide-GDP ribazoletransferase (262 aa).

The next 8 membrane-spanning stretches (helical) occupy residues 4-26 (AWNG…SIAW), 37-57 (CMPL…ALFS), 59-79 (FSFS…IWMA), 112-132 (VGAF…LFLY), 139-159 (IPPA…AWLL), 183-203 (AIWA…STAI), 205-225 (VQTG…AKPW), and 237-257 (VLGA…WLLH).

The protein belongs to the CobS family. It depends on Mg(2+) as a cofactor.

The protein localises to the cell membrane. It carries out the reaction alpha-ribazole + adenosylcob(III)inamide-GDP = adenosylcob(III)alamin + GMP + H(+). The catalysed reaction is alpha-ribazole 5'-phosphate + adenosylcob(III)inamide-GDP = adenosylcob(III)alamin 5'-phosphate + GMP + H(+). It functions in the pathway cofactor biosynthesis; adenosylcobalamin biosynthesis; adenosylcobalamin from cob(II)yrinate a,c-diamide: step 7/7. In terms of biological role, joins adenosylcobinamide-GDP and alpha-ribazole to generate adenosylcobalamin (Ado-cobalamin). Also synthesizes adenosylcobalamin 5'-phosphate from adenosylcobinamide-GDP and alpha-ribazole 5'-phosphate. This is Adenosylcobinamide-GDP ribazoletransferase from Geobacillus kaustophilus (strain HTA426).